The primary structure comprises 323 residues: Olfactory receptor 51S1 (323 aa).

At M1–S33 the chain is on the extracellular side. Residue N11 is glycosylated (N-linked (GlcNAc...) asparagine). Residues W34 to L54 form a helical membrane-spanning segment. Topologically, residues W55–A62 are cytoplasmic. The chain crosses the membrane as a helical span at residues L63–T83. Topologically, residues A84–L107 are extracellular. Residues C105 and C197 are joined by a disulfide bond. The chain crosses the membrane as a helical span at residues Q108 to I128. Over D129 to G147 the chain is Cytoplasmic. A helical membrane pass occupies residues V148–P168. The Extracellular portion of the chain corresponds to F169 to A203. Residues A204–S224 traverse the membrane as a helical segment. Residues Y225–A244 lie on the Cytoplasmic side of the membrane. A helical membrane pass occupies residues G245–L265. The Extracellular portion of the chain corresponds to A266 to H280. A helical membrane pass occupies residues T281–V301. The Cytoplasmic segment spans residues K302–Q323.

The protein belongs to the G-protein coupled receptor 1 family.

It localises to the cell membrane. Functionally, odorant receptor. The sequence is that of Olfactory receptor 51S1 (OR51S1) from Homo sapiens (Human).